Reading from the N-terminus, the 176-residue chain is Magnesium-dependent phosphatase 1 (176 aa).

D11 serves as the catalytic Nucleophile. D11 is a Mg(2+) binding site. Phosphate-binding residues include L12 and D13. Residue D13 coordinates Mg(2+). D13 functions as the Proton donor in the catalytic mechanism. A substrate-binding site is contributed by W20. Residues S69, R70, and K100 each contribute to the phosphate site. R70 lines the substrate pocket. Mg(2+) is bound at residue D123.

This sequence belongs to the HAD-like hydrolase superfamily. Requires Mg(2+) as cofactor.

The catalysed reaction is O-phospho-L-tyrosyl-[protein] + H2O = L-tyrosyl-[protein] + phosphate. Inhibited by vanadate and zinc, and slightly by calcium. Its function is as follows. Magnesium-dependent phosphatase which may act as a tyrosine phosphatase. This chain is Magnesium-dependent phosphatase 1 (MDP1), found in Homo sapiens (Human).